Reading from the N-terminus, the 132-residue chain is Fibroblast growth factor 1 (132 aa).

Heparin-binding positions include asparagine 10 and lysine 108–lysine 120.

This sequence belongs to the heparin-binding growth factors family.

It localises to the secreted. It is found in the cytoplasm. The protein localises to the cell cortex. Its subcellular location is the cytosol. The protein resides in the nucleus. In terms of biological role, plays an important role in the regulation of cell survival, cell division, angiogenesis, cell differentiation and cell migration. Functions as a potent mitogen in vitro. Acts as a ligand for FGFR1 and integrins. Binds to FGFR1 in the presence of heparin leading to FGFR1 dimerization and activation via sequential autophosphorylation on tyrosine residues which act as docking sites for interacting proteins, leading to the activation of several signaling cascades. Binds to integrins. Its binding to integrins and subsequent ternary complex formation with integrins and FGFR1 are essential for FGF1 signaling. This chain is Fibroblast growth factor 1 (fgf1), found in Notophthalmus viridescens (Eastern newt).